The following is a 139-amino-acid chain: Nuclear receptor 2C2-associated protein (139 aa).

The protein belongs to the NR2C2AP family. Interacts with NR2C2/TR4. Expressed in all tissues examined, with highest expression in heart, skeletal muscle and pancreas.

The protein localises to the nucleus. In terms of biological role, may act as a repressor of NR2C2-mediated transactivation by suppressing the binding between NR2C2/TR4 and the TR4-response element in target genes. The protein is Nuclear receptor 2C2-associated protein (NR2C2AP) of Homo sapiens (Human).